A 188-amino-acid chain; its full sequence is Elongation factor P (188 aa).

It belongs to the elongation factor P family.

Its subcellular location is the cytoplasm. It functions in the pathway protein biosynthesis; polypeptide chain elongation. Functionally, involved in peptide bond synthesis. Stimulates efficient translation and peptide-bond synthesis on native or reconstituted 70S ribosomes in vitro. Probably functions indirectly by altering the affinity of the ribosome for aminoacyl-tRNA, thus increasing their reactivity as acceptors for peptidyl transferase. This Malacoplasma penetrans (strain HF-2) (Mycoplasma penetrans) protein is Elongation factor P.